A 425-amino-acid chain; its full sequence is CBS domain-containing protein CBSX6 (425 aa).

One can recognise a CBS 1 domain in the interval 16–90; sequence GKPEMVEFYE…FLAKTECLQE (75 aa). A compositionally biased stretch (low complexity) spans 159 to 172; sequence SENSSSSSGLSADS. The tract at residues 159 to 182 is disordered; the sequence is SENSSSSSGLSADSTNRPTTSMTS. Residues 173–182 show a composition bias toward polar residues; the sequence is TNRPTTSMTS. The next 2 helical transmembrane spans lie at 200–220 and 275–295; these read IGVL…LGII and YLAA…MGVE. The CBS 2 domain maps to 347 to 409; sequence MYRGRSAPLT…TAVTKQPSAF (63 aa).

The protein resides in the vacuole membrane. The protein is CBS domain-containing protein CBSX6 (CBSX6) of Arabidopsis thaliana (Mouse-ear cress).